The chain runs to 227 residues: Probable chorismate pyruvate-lyase (227 aa).

3 residues coordinate substrate: arginine 75, leucine 113, and glutamate 173. A disordered region spans residues 192–227; the sequence is SGDWSAHPRVREHGRPLEHTASRAHPATRASDEQRR. A compositionally biased stretch (basic and acidic residues) spans 200–212; sequence RVREHGRPLEHTA.

Belongs to the UbiC family.

It localises to the cytoplasm. It catalyses the reaction chorismate = 4-hydroxybenzoate + pyruvate. The protein operates within cofactor biosynthesis; ubiquinone biosynthesis. Functionally, removes the pyruvyl group from chorismate, with concomitant aromatization of the ring, to provide 4-hydroxybenzoate (4HB) for the ubiquinone pathway. The polypeptide is Probable chorismate pyruvate-lyase (Paraburkholderia xenovorans (strain LB400)).